Consider the following 236-residue polypeptide: UPF0173 metal-dependent hydrolase Mnod_3315 (236 aa).

The protein belongs to the UPF0173 family.

In Methylobacterium nodulans (strain LMG 21967 / CNCM I-2342 / ORS 2060), this protein is UPF0173 metal-dependent hydrolase Mnod_3315.